The chain runs to 153 residues: 6,7-dimethyl-8-ribityllumazine synthase (153 aa).

5-amino-6-(D-ribitylamino)uracil is bound by residues F21, 55-57 (AFE), and 79-81 (TVI). 84 to 85 (AT) contacts (2S)-2-hydroxy-3-oxobutyl phosphate. The active-site Proton donor is H87. Position 112 (F112) interacts with 5-amino-6-(D-ribitylamino)uracil. Residue R126 participates in (2S)-2-hydroxy-3-oxobutyl phosphate binding.

It belongs to the DMRL synthase family. Forms an icosahedral capsid composed of 60 subunits, arranged as a dodecamer of pentamers.

It catalyses the reaction (2S)-2-hydroxy-3-oxobutyl phosphate + 5-amino-6-(D-ribitylamino)uracil = 6,7-dimethyl-8-(1-D-ribityl)lumazine + phosphate + 2 H2O + H(+). The protein operates within cofactor biosynthesis; riboflavin biosynthesis; riboflavin from 2-hydroxy-3-oxobutyl phosphate and 5-amino-6-(D-ribitylamino)uracil: step 1/2. Catalyzes the formation of 6,7-dimethyl-8-ribityllumazine by condensation of 5-amino-6-(D-ribitylamino)uracil with 3,4-dihydroxy-2-butanone 4-phosphate. This is the penultimate step in the biosynthesis of riboflavin. This chain is 6,7-dimethyl-8-ribityllumazine synthase, found in Bacillus cereus (strain G9842).